Reading from the N-terminus, the 495-residue chain is Ectonucleoside triphosphate diphosphohydrolase 2 (495 aa).

Topologically, residues 1 to 7 (MAGKVRS) are cytoplasmic. A helical transmembrane segment spans residues 8-28 (LLPPLLLAAAGLAGLLLLCVP). Over 29 to 462 (TRDVREPPAL…PGLRKGTDFS (434 aa)) the chain is Extracellular. N-linked (GlcNAc...) asparagine glycosylation occurs at Asn64. Cys75 and Cys99 are joined by a disulfide. A glycan (N-linked (GlcNAc...) asparagine) is linked at Asn129. Glu165 (proton acceptor) is an active-site residue. Residue 204–208 (GASTQ) participates in ATP binding. Disulfide bonds link Cys242-Cys284, Cys265-Cys310, Cys323-Cys328, and Cys377-Cys399. An N-linked (GlcNAc...) asparagine glycan is attached at Asn294. Asn378 and Asn443 each carry an N-linked (GlcNAc...) asparagine glycan. A helical membrane pass occupies residues 463–483 (SWVVLLLLFASALLAALVLLL). At 484–495 (RQVHSAKLPSTI) the chain is on the cytoplasmic side.

This sequence belongs to the GDA1/CD39 NTPase family. Ca(2+) serves as cofactor. The cofactor is Mg(2+). As to expression, brain, placenta, skeletal muscle, kidney, pancreas, heart, ovary, testis, colon, small intestine, prostate and pancreas. No expression in adult thymus, spleen, lung, liver and peripheral blood leukocytes.

It is found in the cell membrane. The protein localises to the endoplasmic reticulum membrane. Its function is as follows. In the nervous system, could hydrolyze ATP and other nucleotides to regulate purinergic neurotransmission. Hydrolyzes ADP only to a marginal extent. The order of activity with different substrates is ATP &gt; GTP &gt; CTP = ITP &gt; UTP &gt;&gt; ADP = UDP. The chain is Ectonucleoside triphosphate diphosphohydrolase 2 (ENTPD2) from Homo sapiens (Human).